The chain runs to 328 residues: Lipoyl synthase (328 aa).

[4Fe-4S] cluster-binding residues include Cys-56, Cys-61, Cys-67, Cys-82, Cys-86, Cys-89, and Ser-298. The 220-residue stretch at 68-287 (WEDREATFLI…KEEAEEIGFS (220 aa)) folds into the Radical SAM core domain.

Belongs to the radical SAM superfamily. Lipoyl synthase family. Requires [4Fe-4S] cluster as cofactor.

Its subcellular location is the cytoplasm. The catalysed reaction is [[Fe-S] cluster scaffold protein carrying a second [4Fe-4S](2+) cluster] + N(6)-octanoyl-L-lysyl-[protein] + 2 oxidized [2Fe-2S]-[ferredoxin] + 2 S-adenosyl-L-methionine + 4 H(+) = [[Fe-S] cluster scaffold protein] + N(6)-[(R)-dihydrolipoyl]-L-lysyl-[protein] + 4 Fe(3+) + 2 hydrogen sulfide + 2 5'-deoxyadenosine + 2 L-methionine + 2 reduced [2Fe-2S]-[ferredoxin]. The protein operates within protein modification; protein lipoylation via endogenous pathway; protein N(6)-(lipoyl)lysine from octanoyl-[acyl-carrier-protein]: step 2/2. Catalyzes the radical-mediated insertion of two sulfur atoms into the C-6 and C-8 positions of the octanoyl moiety bound to the lipoyl domains of lipoate-dependent enzymes, thereby converting the octanoylated domains into lipoylated derivatives. The chain is Lipoyl synthase from Streptomyces avermitilis (strain ATCC 31267 / DSM 46492 / JCM 5070 / NBRC 14893 / NCIMB 12804 / NRRL 8165 / MA-4680).